Consider the following 315-residue polypeptide: Ribose-phosphate pyrophosphokinase (315 aa).

Residues 37–39 (DGE) and 96–97 (RQ) contribute to the ATP site. Mg(2+) is bound by residues histidine 131 and aspartate 170. The active site involves lysine 194. D-ribose 5-phosphate contacts are provided by residues arginine 196, aspartate 220, and 224–228 (DTGGT).

It belongs to the ribose-phosphate pyrophosphokinase family. Class I subfamily. In terms of assembly, homohexamer. Requires Mg(2+) as cofactor.

The protein localises to the cytoplasm. The enzyme catalyses D-ribose 5-phosphate + ATP = 5-phospho-alpha-D-ribose 1-diphosphate + AMP + H(+). It participates in metabolic intermediate biosynthesis; 5-phospho-alpha-D-ribose 1-diphosphate biosynthesis; 5-phospho-alpha-D-ribose 1-diphosphate from D-ribose 5-phosphate (route I): step 1/1. Functionally, involved in the biosynthesis of the central metabolite phospho-alpha-D-ribosyl-1-pyrophosphate (PRPP) via the transfer of pyrophosphoryl group from ATP to 1-hydroxyl of ribose-5-phosphate (Rib-5-P). In Buchnera aphidicola subsp. Schizaphis graminum (strain Sg), this protein is Ribose-phosphate pyrophosphokinase.